A 130-amino-acid chain; its full sequence is Histone H2A type 1-F (130 aa).

The tract at residues 1–22 (MSGRGKQGGKARAKAKTRSSRA) is disordered. Position 2 is a phosphoserine; by RPS6KA5 (serine 2). Arginine 4 is modified (citrulline; alternate). The residue at position 4 (arginine 4) is a Symmetric dimethylarginine; by PRMT5; alternate. 2 positions are modified to N6-(2-hydroxyisobutyryl)lysine: lysine 6 and lysine 10. Residues 7 to 19 (QGGKARAKAKTRS) show a composition bias toward basic residues. An N6-lactoyllysine; alternate modification is found at lysine 10. The residue at position 37 (lysine 37) is an N6-(2-hydroxyisobutyryl)lysine; alternate. Lysine 37 is modified (N6-(beta-hydroxybutyryl)lysine; alternate). Lysine 37 is modified (N6-crotonyllysine; alternate). Residues lysine 75, lysine 76, and lysine 96 each carry the N6-(2-hydroxyisobutyryl)lysine modification. At lysine 96 the chain carries N6-glutaryllysine; alternate. Glutamine 105 is subject to N5-methylglutamine. Position 119 is an N6-(2-hydroxyisobutyryl)lysine; alternate (lysine 119). An N6-crotonyllysine; alternate mark is found at lysine 119 and lysine 120. Lysine 119 and lysine 120 each carry N6-glutaryllysine; alternate. A Glycyl lysine isopeptide (Lys-Gly) (interchain with G-Cter in ubiquitin); alternate cross-link involves residue lysine 120. Threonine 121 bears the Phosphothreonine; by DCAF1 mark. Lysine 126 carries the N6-crotonyllysine; alternate modification. At lysine 126 the chain carries N6-glutaryllysine; alternate.

Belongs to the histone H2A family. In terms of assembly, the nucleosome is a histone octamer containing two molecules each of H2A, H2B, H3 and H4 assembled in one H3-H4 heterotetramer and two H2A-H2B heterodimers. The octamer wraps approximately 147 bp of DNA. Deiminated on Arg-4 in granulocytes upon calcium entry. Post-translationally, monoubiquitination of Lys-120 (H2AK119Ub) by RING1, TRIM37 and RNF2/RING2 complex gives a specific tag for epigenetic transcriptional repression and participates in X chromosome inactivation of female mammals. It is involved in the initiation of both imprinted and random X inactivation. Ubiquitinated H2A is enriched in inactive X chromosome chromatin. Ubiquitination of H2A functions downstream of methylation of 'Lys-27' of histone H3 (H3K27me). H2AK119Ub by RNF2/RING2 can also be induced by ultraviolet and may be involved in DNA repair. Following DNA double-strand breaks (DSBs), it is ubiquitinated through 'Lys-63' linkage of ubiquitin moieties by the E2 ligase UBE2N and the E3 ligases RNF8 and RNF168, leading to the recruitment of repair proteins to sites of DNA damage. Ubiquitination at Lys-14 and Lys-16 (H2AK13Ub and H2AK15Ub, respectively) in response to DNA damage is initiated by RNF168 that mediates monoubiquitination at these 2 sites, and 'Lys-63'-linked ubiquitin are then conjugated to monoubiquitin; RNF8 is able to extend 'Lys-63'-linked ubiquitin chains in vitro. H2AK119Ub and ionizing radiation-induced 'Lys-63'-linked ubiquitination (H2AK13Ub and H2AK15Ub) are distinct events. In terms of processing, phosphorylation on Ser-2 (H2AS1ph) is enhanced during mitosis. Phosphorylation on Ser-2 by RPS6KA5/MSK1 directly represses transcription. Acetylation of H3 inhibits Ser-2 phosphorylation by RPS6KA5/MSK1. Phosphorylation at Thr-121 (H2AT120ph) by DCAF1 is present in the regulatory region of many tumor suppresor genes and down-regulates their transcription. Symmetric dimethylation on Arg-4 by the PRDM1/PRMT5 complex may play a crucial role in the germ-cell lineage. Post-translationally, glutamine methylation at Gln-105 (H2AQ104me) by FBL is specifically dedicated to polymerase I. It is present at 35S ribosomal DNA locus and impairs binding of the FACT complex. In terms of processing, crotonylation (Kcr) is specifically present in male germ cells and marks testis-specific genes in post-meiotic cells, including X-linked genes that escape sex chromosome inactivation in haploid cells. Crotonylation marks active promoters and enhancers and confers resistance to transcriptional repressors. It is also associated with post-meiotically activated genes on autosomes. Lactylated in macrophages by EP300/P300 by using lactoyl-CoA directly derived from endogenous or exogenous lactate, leading to stimulates gene transcription.

Its subcellular location is the nucleus. It localises to the chromosome. Functionally, core component of nucleosome. Nucleosomes wrap and compact DNA into chromatin, limiting DNA accessibility to the cellular machineries which require DNA as a template. Histones thereby play a central role in transcription regulation, DNA repair, DNA replication and chromosomal stability. DNA accessibility is regulated via a complex set of post-translational modifications of histones, also called histone code, and nucleosome remodeling. The protein is Histone H2A type 1-F of Rattus norvegicus (Rat).